The following is a 495-amino-acid chain: Aspartyl/glutamyl-tRNA(Asn/Gln) amidotransferase subunit B (495 aa).

The protein belongs to the GatB/GatE family. GatB subfamily. Heterotrimer of A, B and C subunits.

It catalyses the reaction L-glutamyl-tRNA(Gln) + L-glutamine + ATP + H2O = L-glutaminyl-tRNA(Gln) + L-glutamate + ADP + phosphate + H(+). The enzyme catalyses L-aspartyl-tRNA(Asn) + L-glutamine + ATP + H2O = L-asparaginyl-tRNA(Asn) + L-glutamate + ADP + phosphate + 2 H(+). In terms of biological role, allows the formation of correctly charged Asn-tRNA(Asn) or Gln-tRNA(Gln) through the transamidation of misacylated Asp-tRNA(Asn) or Glu-tRNA(Gln) in organisms which lack either or both of asparaginyl-tRNA or glutaminyl-tRNA synthetases. The reaction takes place in the presence of glutamine and ATP through an activated phospho-Asp-tRNA(Asn) or phospho-Glu-tRNA(Gln). The protein is Aspartyl/glutamyl-tRNA(Asn/Gln) amidotransferase subunit B of Rippkaea orientalis (strain PCC 8801 / RF-1) (Cyanothece sp. (strain PCC 8801)).